We begin with the raw amino-acid sequence, 265 residues long: Esterase claE (265 aa).

Active-site charge relay system residues include S121, D211, and H239.

It belongs to the LovG family.

It participates in secondary metabolite biosynthesis. Esterase; part of the cla gene cluster that produces clavatol and ortho-quinone methide. The clavatol biosynthesis cluster cla and the terrestric acid cluster tra are both involved in the production of peniphenones and penilactones. The non-reducing PKS claF is responsible for the formation of clavatol from successive condensations of 3 malonyl-CoA units, presumably with a simple acetyl-CoA starter unit, and 2 methylation steps. The esterase claE probably collaborates with claF by catalyzing the hydrolysis of ACP-bound acyl intermediates to free the ACP from stalled intermediates. The clavatol oxidase claD then converts clavatol to hydroxyclavatol. Spontaneous dehydration of hydroxyclavatol leads to the accumulation of the highly active ortho-quinone methide. On the other hand, the PKS-NRPS hybrid traA is involved in the formation of crustosic acid, with the help of traB and traD. The polyketide synthase module (PKS) of traA is responsible for the synthesis of the polyketide backbone via the condensation of an acetyl-CoA starter unit with 3 malonyl-CoA units. The downstream nonribosomal peptide synthetase (NRPS) module then amidates the carboxyl end of the polyketide with L-malic acid. Because traA lacks a designated enoylreductase (ER) domain, the required activity is provided the enoyl reductase traG. Crustosic acid undergoes decarboxylation and isomerization to the terrestric acid, catalyzed by the 2-oxoglutarate-dependent dioxygenase traH. Both acids are further converted to the 2 gamma-butyrolactones (R)-5-methyltetronic acid and (S)-5-carboxylmethyltetronic acid, with involvement of the cytochrome P450 monooxygenase claJ. Spontaneous addition of the methide to these gamma-butyrolactones leads to peniphenone D and penilactone D, which undergo again stereospecific attacking by methide to give penilactones A and B. This is Esterase claE from Penicillium crustosum (Blue mold fungus).